A 229-amino-acid chain; its full sequence is UPF0173 metal-dependent hydrolase SAB1566c (229 aa).

Belongs to the UPF0173 family.

The polypeptide is UPF0173 metal-dependent hydrolase SAB1566c (Staphylococcus aureus (strain bovine RF122 / ET3-1)).